A 171-amino-acid polypeptide reads, in one-letter code: NADH-quinone oxidoreductase subunit B (171 aa).

[4Fe-4S] cluster-binding residues include Cys34, Cys35, Cys99, and Cys128.

It belongs to the complex I 20 kDa subunit family. NDH-1 is composed of 14 different subunits. Subunits NuoB, C, D, E, F, and G constitute the peripheral sector of the complex. Requires [4Fe-4S] cluster as cofactor.

The protein localises to the cell inner membrane. It catalyses the reaction a quinone + NADH + 5 H(+)(in) = a quinol + NAD(+) + 4 H(+)(out). In terms of biological role, NDH-1 shuttles electrons from NADH, via FMN and iron-sulfur (Fe-S) centers, to quinones in the respiratory chain. The immediate electron acceptor for the enzyme in this species is believed to be ubiquinone. Couples the redox reaction to proton translocation (for every two electrons transferred, four hydrogen ions are translocated across the cytoplasmic membrane), and thus conserves the redox energy in a proton gradient. The chain is NADH-quinone oxidoreductase subunit B from Sulfurihydrogenibium sp. (strain YO3AOP1).